Consider the following 596-residue polypeptide: Succinate dehydrogenase flavoprotein subunit (596 aa).

FAD-binding positions include 18–23 (GAGGAG), 41–56 (TKLF…AQGG), and Asp-225. Position 49 is a tele-8alpha-FAD histidine (His-49). Positions 246 and 258 each coordinate substrate. Arg-290 serves as the catalytic Proton acceptor. Residue His-357 coordinates substrate. Glu-391 contacts FAD. Arg-402 lines the substrate pocket. An FAD-binding site is contributed by 407–408 (SL).

It belongs to the FAD-dependent oxidoreductase 2 family. FRD/SDH subfamily. As to quaternary structure, part of an enzyme complex containing four subunits: a flavoprotein, an iron-sulfur, cytochrome b-556, and a hydrophobic anchor protein. It depends on FAD as a cofactor.

The protein resides in the cell inner membrane. It carries out the reaction a quinone + succinate = fumarate + a quinol. It functions in the pathway carbohydrate metabolism; tricarboxylic acid cycle; fumarate from succinate (bacterial route): step 1/1. The polypeptide is Succinate dehydrogenase flavoprotein subunit (sdhA) (Rickettsia conorii (strain ATCC VR-613 / Malish 7)).